The following is a 430-amino-acid chain: NAD(P)(+) glycohydrolase toxin Tse6 (430 aa).

The next 3 helical transmembrane spans lie at 17–37, 46–66, and 193–213; these read FGVA…AAVV, LAAV…FQIV, and LLLA…IGGL.

As to quaternary structure, interacts with Tsi6, VgrG1a, EagT6 and EF-Tu.

It is found in the membrane. The catalysed reaction is NAD(+) + H2O = ADP-D-ribose + nicotinamide + H(+). In terms of biological role, type VI secretion exported toxin that acts as a glycohydrolase on bacterial target cells and degrades the essential dinucleotides NAD(+) and NADP(+), thereby inducing bacteriostasis. The activity resides in the C-terminal region that is initially neutralized by the cognate immunity protein Tsi6. The protein is NAD(P)(+) glycohydrolase toxin Tse6 of Pseudomonas aeruginosa (strain ATCC 15692 / DSM 22644 / CIP 104116 / JCM 14847 / LMG 12228 / 1C / PRS 101 / PAO1).